Here is a 40-residue protein sequence, read N- to C-terminus: Photosystem II reaction center protein J (40 aa).

A helical membrane pass occupies residues Ile-8 to Phe-28.

It belongs to the PsbJ family. In terms of assembly, PSII is composed of 1 copy each of membrane proteins PsbA, PsbB, PsbC, PsbD, PsbE, PsbF, PsbH, PsbI, PsbJ, PsbK, PsbL, PsbM, PsbT, PsbX, PsbY, PsbZ, Psb30/Ycf12, at least 3 peripheral proteins of the oxygen-evolving complex and a large number of cofactors. It forms dimeric complexes.

It is found in the plastid. Its subcellular location is the chloroplast thylakoid membrane. One of the components of the core complex of photosystem II (PSII). PSII is a light-driven water:plastoquinone oxidoreductase that uses light energy to abstract electrons from H(2)O, generating O(2) and a proton gradient subsequently used for ATP formation. It consists of a core antenna complex that captures photons, and an electron transfer chain that converts photonic excitation into a charge separation. The chain is Photosystem II reaction center protein J from Nasturtium officinale (Watercress).